The chain runs to 454 residues: Gastrin/cholecystokinin type B receptor (454 aa).

The Extracellular portion of the chain corresponds to 1 to 57 (MELLKPNRSVLGSGPGPGASLCRSGGPLLNGSGTGNLSCEPPRIRGAGTRELELAIR). N-linked (GlcNAc...) asparagine glycosylation is found at Asn-7, Asn-30, and Asn-36. Residues 58 to 79 (VTLYAVIFLMSVGGNVLIIVVL) form a helical membrane-spanning segment. The Cytoplasmic segment spans residues 80–87 (GLSRRLRT). A helical membrane pass occupies residues 88 to 109 (VTNAFLLSLAVSDLLLAVACMP). Topologically, residues 110 to 131 (FTLLPNLMGTFIFGTVVCKAVS) are extracellular. Cys-127 and Cys-205 are disulfide-bonded. Residues 132-150 (YFMGVSVSVSTLSLVAIAL) form a helical membrane-spanning segment. The Cytoplasmic segment spans residues 151 to 170 (ERYSAICRPLQARVWQTRSH). A helical membrane pass occupies residues 171 to 189 (AARVIVATWMLSGLLMVPY). The Extracellular segment spans residues 190 to 219 (PVYTAVQPAGPRVLQCMHRWPSARVRQTWS). Residues 220 to 242 (VLLLLLLFFVPGVVMAVAYGLIS) traverse the membrane as a helical segment. Residues 243–340 (RELYLGLRFD…KLLAKKRVVR (98 aa)) lie on the Cytoplasmic side of the membrane. Positions 257–284 (SESQSRVGSQGGLPGGTGQGPAQANGRC) are disordered. Positions 265-275 (SQGGLPGGTGQ) are enriched in gly residues. A helical transmembrane segment spans residues 341–362 (MLLVIVVLFFLCWLPVYSANTW). Residues 363–380 (RAFDGPGAHRALSGAPIS) are Extracellular-facing. The helical transmembrane segment at 381 to 401 (FIHLLTYASACVNPLVYCFMH) threads the bilayer. At 402 to 454 (RRFRQACLDTCTRCCPRPPRARPRPLPDEDPPTPSIASLSRLSYTTISTLGPG) the chain is on the cytoplasmic side. The S-palmitoyl cysteine moiety is linked to residue Cys-415. The segment at 422 to 441 (ARPRPLPDEDPPTPSIASLS) is disordered.

This sequence belongs to the G-protein coupled receptor 1 family.

The protein localises to the cell membrane. In terms of biological role, receptor for gastrin and cholecystokinin. The CCK-B receptors occur throughout the central nervous system where they modulate anxiety, analgesia, arousal, and neuroleptic activity. This receptor mediates its action by association with G proteins that activate a phosphatidylinositol-calcium second messenger system. In Bos taurus (Bovine), this protein is Gastrin/cholecystokinin type B receptor (CCKBR).